The chain runs to 310 residues: Glutaminase (310 aa).

Serine 67, asparagine 118, glutamate 161, asparagine 168, tyrosine 192, tyrosine 244, and valine 262 together coordinate substrate.

It belongs to the glutaminase family. Homotetramer.

It catalyses the reaction L-glutamine + H2O = L-glutamate + NH4(+). The chain is Glutaminase from Legionella pneumophila (strain Corby).